The sequence spans 283 residues: Isochorismatase domain-containing protein 1 (283 aa).

The protein belongs to the isochorismatase family.

In Danio rerio (Zebrafish), this protein is Isochorismatase domain-containing protein 1 (isoc1).